The primary structure comprises 464 residues: Vacuolar protein sorting-associated protein atg6 (464 aa).

A disordered region spans residues 38–57 (SLTEMNESGESDDQMNSSSE). Residues 144–274 (VECAELLTEE…NSRKLEKLQK (131 aa)) adopt a coiled-coil conformation. The interval 275–461 (MNVFSDIFYI…EAYVSSQDKQ (187 aa)) is BARA.

This sequence belongs to the beclin family. In terms of assembly, component of the autophagy-specific vps34 PI3-kinase complex I composed of vps15, atg6, pik3/vps34, atg14 and atg38. Also a component of the vps34 PI3-kinase complex II composed of atg6, pik3, vps15 and vps38.

The protein localises to the endosome membrane. The protein resides in the vacuole membrane. It is found in the preautophagosomal structure membrane. It localises to the cytoplasm. Functionally, functions as a part of the autophagy-specific VPS34 PI3-kinase complex I that plays a role in autophagosome assembly. This complex is essential to recruit the atg8-phosphatidylinositol conjugate and the atg12-atg5 conjugate to the pre-autophagosomal structure. Also functions as part of the VPS34 PI3-kinase complex II. This is Vacuolar protein sorting-associated protein atg6 (atg6) from Schizosaccharomyces pombe (strain 972 / ATCC 24843) (Fission yeast).